The chain runs to 386 residues: MSDVSGKVNLLNFDHKSMREYLESIGEKPFRADQIMKWIYHFGYSDFEQMTNINKKLREKLQRNCIISAPDISEKQVSEDGTIKYALKLEGGQEVETVWIPENDRATLCVSSQVGCALECTFCATAQQGFNRNLSMAEIIGQVWRVANDIGATRIAGTRPITNIVMMGMGEPLLNMKNLIPALDTMLNDLGYGLSKRRVTVSTSGVVPALDMLKAKIDCALAISIHAPNNKLRDELVPINKKYPLEDFIAAAGRYIEGSKANKQATIEYVMLDHVNDSTDQAHELAHALKGLPSKINLIPFNPYPGSPYSRSSNSRIDRFDKVLQSYGLTVITRRTRGEDIDAACGQLAGDVFDRTKRSVINAAKNAEISSLKNQPKADTISIKVV.

The Proton acceptor role is filled by glutamate 96. Positions 102–340 (ENDRATLCVS…VITRRTRGED (239 aa)) constitute a Radical SAM core domain. Cysteine 109 and cysteine 345 are joined by a disulfide. Residues cysteine 116, cysteine 120, and cysteine 123 each contribute to the [4Fe-4S] cluster site. Residues 170-171 (GE), serine 202, 224-226 (SIH), and asparagine 302 contribute to the S-adenosyl-L-methionine site. Residue cysteine 345 is the S-methylcysteine intermediate of the active site.

Belongs to the radical SAM superfamily. RlmN family. It depends on [4Fe-4S] cluster as a cofactor.

It localises to the cytoplasm. The enzyme catalyses adenosine(2503) in 23S rRNA + 2 reduced [2Fe-2S]-[ferredoxin] + 2 S-adenosyl-L-methionine = 2-methyladenosine(2503) in 23S rRNA + 5'-deoxyadenosine + L-methionine + 2 oxidized [2Fe-2S]-[ferredoxin] + S-adenosyl-L-homocysteine. The catalysed reaction is adenosine(37) in tRNA + 2 reduced [2Fe-2S]-[ferredoxin] + 2 S-adenosyl-L-methionine = 2-methyladenosine(37) in tRNA + 5'-deoxyadenosine + L-methionine + 2 oxidized [2Fe-2S]-[ferredoxin] + S-adenosyl-L-homocysteine. In terms of biological role, specifically methylates position 2 of adenine 2503 in 23S rRNA and position 2 of adenine 37 in tRNAs. m2A2503 modification seems to play a crucial role in the proofreading step occurring at the peptidyl transferase center and thus would serve to optimize ribosomal fidelity. This chain is Dual-specificity RNA methyltransferase RlmN, found in Colwellia psychrerythraea (strain 34H / ATCC BAA-681) (Vibrio psychroerythus).